Reading from the N-terminus, the 972-residue chain is Coatomer subunit beta (972 aa).

HEAT repeat units follow at residues 79–113 (LLYF…DLQH), 133–170 (ELLE…VSEH), 317–354 (GCLE…SRNI), 397–434 (EIAA…LYPQ), and 481–518 (RQSI…QAGP). Positions 494-522 (LKNQRKSQDEDDEATEESATKQAGPVILP) are disordered.

In terms of assembly, oligomeric complex that consists of at least the alpha, beta, beta', gamma, delta, epsilon and zeta subunits.

It is found in the cytoplasm. The protein localises to the golgi apparatus membrane. Its subcellular location is the cytoplasmic vesicle. The protein resides in the COPI-coated vesicle membrane. The coatomer is a cytosolic protein complex that binds to dilysine motifs and reversibly associates with Golgi non-clathrin-coated vesicles, which further mediate biosynthetic protein transport from the ER, via the Golgi up to the trans Golgi network. Coatomer complex is required for budding from Golgi membranes, and is essential for the retrograde Golgi-to-ER transport of dilysine-tagged proteins. In Candida glabrata (strain ATCC 2001 / BCRC 20586 / JCM 3761 / NBRC 0622 / NRRL Y-65 / CBS 138) (Yeast), this protein is Coatomer subunit beta.